A 309-amino-acid polypeptide reads, in one-letter code: Protein FdhE homolog (309 aa).

Residues 1–22 (MSIRIVPQEQLEQNGKSTPEGH) are disordered.

It belongs to the FdhE family.

Its subcellular location is the cytoplasm. Its function is as follows. Necessary for formate dehydrogenase activity. The sequence is that of Protein FdhE homolog from Pectobacterium carotovorum subsp. carotovorum (strain PC1).